The following is an 86-amino-acid chain: Putative pro-MCH-like protein 1 (86 aa).

Residues 31-49 (GSVAFPAENGVQDTESTQE) are NGE-like. The interval 38–62 (ENGVQDTESTQEKRETGDEENSAKF) is disordered. Residues 52–64 (ETGDEENSAKFPV) are NEI-like. Residues 68–86 (DFDTLSCMLGRVYQSCWQV) are melanin-concentrating hormone-like.

Belongs to the melanin-concentrating hormone family. Expressed in testis and brain.

This is Putative pro-MCH-like protein 1 (PMCHL1) from Homo sapiens (Human).